A 208-amino-acid chain; its full sequence is Small ribosomal subunit protein uS2 (208 aa).

The disordered stretch occupies residues 189 to 208 (KPDQDLPVPPEEFETKLVQS).

The protein belongs to the universal ribosomal protein uS2 family.

The polypeptide is Small ribosomal subunit protein uS2 (rps2) (Pyrobaculum aerophilum (strain ATCC 51768 / DSM 7523 / JCM 9630 / CIP 104966 / NBRC 100827 / IM2)).